The primary structure comprises 1690 residues: Trinucleotide repeat-containing gene 6C protein (1690 aa).

Polar residues-rich tracts occupy residues 1–12 (MATGSAQSSFPS), 19–36 (GSHG…NQSA), and 160–183 (AEPQ…NTDG). 4 disordered regions span residues 1–42 (MATG…AGGT), 158–202 (ESAE…AMQT), 226–848 (PGAN…EPVV), and 863–928 (CKPA…TPGK). Residues 1 to 921 (MATGSAQSSF…GNTSKKGLQK (921 aa)) form a sufficient for interaction with argonaute family proteins region. Over residues 184–198 (PNNTNPMNSSPNPIN) the composition is skewed to low complexity. Over residues 255-288 (NPATGSTNCGFSQGNGDTVNSALSAKQNGSSSAV) the composition is skewed to polar residues. R313 is modified (omega-N-methylarginine). Residues 362 to 374 (GWDSASAASQTPA) are compositionally biased toward polar residues. Residues 384–404 (SWAKATSSGTTASEGSSDGSG) are compositionally biased toward low complexity. Residues 415-426 (GTGEGRRRDKGV) are compositionally biased toward basic and acidic residues. Over residues 444–459 (LSNSGWGQTPVKQNTA) the composition is skewed to polar residues. The span at 464-474 (ESPRSERKNDN) shows a compositional bias: basic and acidic residues. S465 is modified (phosphoserine). Composition is skewed to polar residues over residues 482–510 (IATQ…SGWV), 519–530 (ANTSWGDSNNKA), 540–551 (SISSTAVNNAAA), 644–656 (GTNA…TNWG), and 663–678 (PQQN…NVSN). S714 is subject to Phosphoserine. The segment covering 754-771 (SSTTAPATPTTPTSSSTT) has biased composition (low complexity). Residue T776 is modified to Phosphothreonine. Over residues 778–788 (PSHQAGTQLNR) the composition is skewed to polar residues. A compositionally biased stretch (low complexity) spans 901–915 (SQESSSSCSSWGNTS). Residues 928–973 (KQDEAWIMSRLIKQLTDMGFPREPAEEALKSNSMNLDQAMSALLEK) form the UBA domain. S1006 carries the post-translational modification Phosphoserine. A coiled-coil region spans residues 1156 to 1214 (QLQLAYQRLQIQQQMLQAQRNVSGPMRQQEQQVARTITNLQQQIQQHQRQLAQALLVKQ). 5 disordered regions span residues 1212–1337 (VKQP…PPGK), 1351–1380 (QNSE…ISNG), 1397–1421 (GLQN…PTIN), 1441–1486 (IKST…PSST), and 1600–1625 (PPTS…THGL). Pro residues predominate over residues 1214–1223 (QPPPPPPPPH). The segment at 1260 to 1690 (NTFAPYPLAG…PGDLLSGESI (431 aa)) is silencing domain; interaction with CNOT1 and PAN3. The segment covering 1272 to 1321 (PNMNVNSIDMSSGLSVKDPSQSQSRLPQWTHPNSMGNLSSAASPLDQNPS) has biased composition (polar residues). Residues 1371–1417 (KSDSDKISNGSSISWPPEFHPGVPWKGLQNIDPENDPDVTPGSVPTG) are required for interaction with PABPC1. Residues 1371–1690 (KSDSDKISNG…PGDLLSGESI (320 aa)) are sufficient for translational repression when tethered to a target mRNA. The PABPC1-interacting motif-2 (PAM2) stretch occupies residues 1381-1399 (SSISWPPEFHPGVPWKGLQ). Residues 1441 to 1457 (IKSTWSSGPASHTQASL) show a composition bias toward polar residues. The RRM domain maps to 1565 to 1632 (AQKSLHMCVL…HGLVRSDTAH (68 aa)). Residues 1596–1690 (GQALPPTSSW…PGDLLSGESI (95 aa)) form an interaction with the CCR4-NOT complex region. The span at 1603-1613 (SSWQSSSGGSQ) shows a compositional bias: low complexity.

This sequence belongs to the GW182 family. In terms of assembly, interacts with one or more of the argonaute family proteins AGO1, AGO2, AGO3 and AGO4. Interacts with CNOT1; the interaction mediates the association with the CCR4-NOT complex. Interacts with PAN3; the interaction mediates the association with the PAN complex.

In terms of biological role, plays a role in RNA-mediated gene silencing by micro-RNAs (miRNAs). Required for miRNA-dependent translational repression of complementary mRNAs by argonaute family proteins As scaffoldng protein associates with argonaute proteins bound to partially complementary mRNAs and simultaneously can recruit CCR4-NOT and PAN deadenylase complexes. This chain is Trinucleotide repeat-containing gene 6C protein (Tnrc6c), found in Mus musculus (Mouse).